Here is a 134-residue protein sequence, read N- to C-terminus: Cerato-platanin (134 aa).

The signal sequence occupies residues 1-14; sequence MKFSILPMIASAMA. Residues 18–20 form a binding of oligomers of N-acetylglucosamine (GlcNAc) region; that stretch reads SYD. Binding of N-acetylglucosamine tetramer (GlcNAc-4) stretches follow at residues 31–43, 65–68, and 91–95; these read SVAC…GLMA, GWDS, and DSGRG. Cystine bridges form between Cys-34–Cys-71 and Cys-74–Cys-129. The tract at residues 113–116 is binding of oligomers of N-acetylglucosamine (GlcNAc); that stretch reads AGRV.

It belongs to the cerato-platanin family. Monomer.

It localises to the secreted. The protein resides in the cell wall. Phytotoxin which causes production of phytoalexin in platanus acerifolia, platanus occidentalis and platanus orientalis. Induces cell necrosis in tobacco leaves, and in callus cells and leaves of P.acerifolia. Induces reactive oxygen species (ROS) synthesis, nitric oxide (NO) production and mitogen-activated protein kinases (MAPKs) phosphorylation in the leaves of A.thaliana and P.acerifolia. Results in H(2)O(2) production on the epidermis around the stomata, rapid closure of the stomata, reduced photosynthetic and CO(2) assimilation rate, and an increase in a number of volatile organic compound (VOC) emission in A.thaliana leaves. Induces overexpression of genes related to salicylic acid- and ethylene-signaling, camalexin synthesis, ROS production and oxidative stress, and genes of various receptor kinases, and down-regulation of a number of jasmonic acid (JA)-signaling genes in A.thaliana leaves. Renders resistance against C.platani in A.thaliana and P.acerifolia. Renders localised resistance of A.thaliana against infection by virulent foliar pathogens B.cinerea and P.syringae pv. tomato. Binds cellulose analog carboxymethyl cellulose (CMC). Expansin-like protein with probable fungal and plant cell wall loosening activity based on its non-enzymatic cellulose weakening activity in vitro. Increases glucose production by cellulase after pre-incubation of cellulose with this protein. In contrast, according to PubMed:23512479, no synergistic effect with cellulases. May have a structural role in the fungal cell wall based on its ability to bind chitin, but does not bind beta-1,3-glucan. This Ceratocystis fimbriata f. sp. platani protein is Cerato-platanin.